The sequence spans 740 residues: UvrABC system protein B (740 aa).

Positions 1 to 36 are disordered; the sequence is MTIAIRTTLDEPENHSDFVPHRPSRPEKTEPSKPFR. Residues 8 to 33 show a composition bias toward basic and acidic residues; sequence TLDEPENHSDFVPHRPSRPEKTEPSK. The 389-residue stretch at 56-444 folds into the Helicase ATP-binding domain; that stretch reads KDIQKGERDQ…GGVFVEQIIR (389 aa). 69–76 contacts ATP; that stretch reads GVTGSGKT. The Beta-hairpin motif lies at 122–145; that stretch reads YYDYYQPEAYVPRTDTYIEKDSAI. Positions 461–627 constitute a Helicase C-terminal domain; that stretch reads QVDNLIFEAK…TVKRQVDDIV (167 aa). In terms of domain architecture, UVR spans 651–686; the sequence is ARSISETEKEMLEAAANLEFEKAAQLRDVLHQLKRQ. Residues 687–740 form a disordered region; sequence ELGLPPEKSSEIQGRSEAGRPGTRKTRSDKAREAKASKRVKQEAGEKLLRSRGH. Over residues 712 to 740 the composition is skewed to basic and acidic residues; it reads TRSDKAREAKASKRVKQEAGEKLLRSRGH.

The protein belongs to the UvrB family. As to quaternary structure, forms a heterotetramer with UvrA during the search for lesions. Interacts with UvrC in an incision complex.

The protein resides in the cytoplasm. The UvrABC repair system catalyzes the recognition and processing of DNA lesions. A damage recognition complex composed of 2 UvrA and 2 UvrB subunits scans DNA for abnormalities. Upon binding of the UvrA(2)B(2) complex to a putative damaged site, the DNA wraps around one UvrB monomer. DNA wrap is dependent on ATP binding by UvrB and probably causes local melting of the DNA helix, facilitating insertion of UvrB beta-hairpin between the DNA strands. Then UvrB probes one DNA strand for the presence of a lesion. If a lesion is found the UvrA subunits dissociate and the UvrB-DNA preincision complex is formed. This complex is subsequently bound by UvrC and the second UvrB is released. If no lesion is found, the DNA wraps around the other UvrB subunit that will check the other stand for damage. This is UvrABC system protein B from Zymomonas mobilis subsp. mobilis (strain ATCC 31821 / ZM4 / CP4).